The chain runs to 304 residues: tRNA dimethylallyltransferase (304 aa).

Position 13–20 (13–20) interacts with ATP; the sequence is GPTAAGKT. Residue 15-20 participates in substrate binding; it reads TAAGKT. Residues 38–41 are interaction with substrate tRNA; that stretch reads DSRQ.

This sequence belongs to the IPP transferase family. As to quaternary structure, monomer. Mg(2+) serves as cofactor.

The catalysed reaction is adenosine(37) in tRNA + dimethylallyl diphosphate = N(6)-dimethylallyladenosine(37) in tRNA + diphosphate. Its function is as follows. Catalyzes the transfer of a dimethylallyl group onto the adenine at position 37 in tRNAs that read codons beginning with uridine, leading to the formation of N6-(dimethylallyl)adenosine (i(6)A). The chain is tRNA dimethylallyltransferase from Cytophaga hutchinsonii (strain ATCC 33406 / DSM 1761 / CIP 103989 / NBRC 15051 / NCIMB 9469 / D465).